A 971-amino-acid chain; its full sequence is Dynamin-like GTPase OPA1, mitochondrial (971 aa).

The N-terminal 89 residues, 1–89 (MLRVGRAVAC…GGWRYQQHRS (89 aa)), are a transit peptide targeting the mitochondrion. Topologically, residues 90 to 98 (FWMLRLASR) are mitochondrial matrix. Residues 99–115 (LLKLRYIVLGSAVGGGY) traverse the membrane as a helical segment. Residues 116–781 (TAKKTYEEWK…SVINDMVGPD (666 aa)) lie on the Mitochondrial intermembrane side of the membrane. Residues 204 to 224 (EAPVTATPEASDKQFKKSSDK) form a disordered region. Basic and acidic residues predominate over residues 213–224 (ASDKQFKKSSDK). Positions 219–265 (KKSSDKEKVDQLQEELLRTQMKYQRMLERLEKENKDLRKVVLQKDEK) form a coiled coil. A Dynamin-type G domain is found at 297–572 (QDHLPRVVVV…FWKMVRESVE (276 aa)). Positions 307–314 (GDQSAGKT) are G1 motif. GTP-binding residues include Ser310, Gly312, Lys313, Thr314, Ser315, and Gly329. Residue Thr314 participates in Mg(2+) binding. Residues 333 to 336 (MMTR) form a G2 motif region. Mg(2+) contacts are provided by Thr335 and Asp410. Residues 410-413 (DLPG) form a G3 motif region. The interval 478 to 481 (TKVD) is G4 motif. The GTP site is built by Lys479, Asp481, and Thr514. The tract at residues 512–515 (VVTG) is G5 motif. Stalk region stretches follow at residues 600-847 (DRNE…IKDT) and 885-939 (CNDV…VHLI). Residues 747 to 867 (TDKPQWDAAI…QKALQHCNLC (121 aa)) are paddle region. The stretch at 782–792 (WKQRWMSWKNR) is an intramembrane region. Residues 793-971 (SPEQHTRNET…AFIEALHKEK (179 aa)) are Mitochondrial intermembrane-facing. Residues Cys867 and Cys885 are joined by a disulfide bond. Residues 906 to 971 (RQQLTNTEVR…AFIEALHKEK (66 aa)) are a coiled coil.

Belongs to the TRAFAC class dynamin-like GTPase superfamily. Dynamin/Fzo/YdjA family. As to quaternary structure, oligomeric complex consisting of membrane-bound and soluble forms of OPA1. Cleaved by OMA1 or YME1L downstream of the transmembrane region in response to different signals to generate soluble forms. Cleaved by OMA1 at position S1 following stress conditions, generating the short soluble form (Dynamin-like GTPase OPA1, short form; S-OPA1). In terms of tissue distribution, strongly expressed in the brain, ovary and skeletal muscle. In the brain, expression of the mRNA was observed specifically in motor neurons, in nucleus oculomotorius, in nucleus valvulae lateralis, in the medulla oblongata and in the spinal cord.

It is found in the mitochondrion inner membrane. The protein localises to the mitochondrion intermembrane space. The catalysed reaction is GTP + H2O = GDP + phosphate + H(+). Its function is as follows. Dynamin-related GTPase that is essential for normal mitochondrial morphology by mediating fusion of the mitochondrial inner membranes, regulating cristae morphology and maintaining respiratory chain function. Exists in two forms: the transmembrane, long form (Dynamin-like GTPase OPA1, long form; L-OPA1), which is tethered to the inner mitochondrial membrane, and the short soluble form (Dynamin-like GTPase OPA1, short form; S-OPA1), which results from proteolytic cleavage and localizes in the intermembrane space. Both forms (L-OPA1 and S-OPA1) cooperate to catalyze the fusion of the mitochondrial inner membrane. The equilibrium between L-OPA1 and S-OPA1 is essential: excess levels of S-OPA1, produced by cleavage by OMA1 following loss of mitochondrial membrane potential, lead to an impaired equilibrium between L-OPA1 and S-OPA1, inhibiting mitochondrial fusion. The balance between L-OPA1 and S-OPA1 also influences cristae shape and morphology. Its role in mitochondrial morphology is required for mitochondrial genome maintenance. Functionally, constitutes the transmembrane long form (L-OPA1) that plays a central role in mitochondrial inner membrane fusion and cristae morphology. L-OPA1 and the soluble short form (S-OPA1) form higher-order helical assemblies that coordinate the fusion of mitochondrial inner membranes. Inner membrane-anchored L-OPA1 molecules initiate membrane remodeling by recruiting soluble S-OPA1 to rapidly polymerize into a flexible cylindrical scaffold encaging the mitochondrial inner membrane. Once at the membrane surface, the formation of S-OPA1 helices induce bilayer curvature. OPA1 dimerization through the paddle region, which inserts into cardiolipin-containing membrane, promotes GTP hydrolysis and the helical assembly of a flexible OPA1 lattice on the membrane, which drives membrane curvature and mitochondrial fusion. Plays a role in the maintenance and remodeling of mitochondrial cristae, some invaginations of the mitochondrial inner membrane that provide an increase in the surface area. Probably acts by forming helical filaments at the inside of inner membrane tubes with the shape and dimensions of crista junctions. In terms of biological role, constitutes the soluble short form (S-OPA1) generated by cleavage by OMA1, which plays a central role in mitochondrial inner membrane fusion and cristae morphology. The transmembrane long form (L-OPA1) and the S-OPA1 form higher-order helical assemblies that coordinate the fusion of mitochondrial inner membranes. Inner membrane-anchored L-OPA1 molecules initiate membrane remodeling by recruiting soluble S-OPA1 to rapidly polymerize into a flexible cylindrical scaffold encaging the mitochondrial inner membrane. Once at the membrane surface, the formation of S-OPA1 helices induce bilayer curvature. OPA1 dimerization through the paddle region, which inserts into cardiolipin-containing membrane, promotes GTP hydrolysis and the helical assembly of a flexible OPA1 lattice on the membrane, which drives membrane curvature and mitochondrial fusion. Excess levels of S-OPA1 produced by cleavage by OMA1 following stress conditions that induce loss of mitochondrial membrane potential, lead to an impaired equilibrium between L-OPA1 and S-OPA1, thereby inhibiting mitochondrial fusion. Plays a role in the maintenance and remodeling of mitochondrial cristae, some invaginations of the mitochondrial inner membrane that provide an increase in the surface area. Probably acts by forming helical filaments at the inside of inner membrane tubes with the shape and dimensions of crista junctions. The chain is Dynamin-like GTPase OPA1, mitochondrial (opa1) from Oncorhynchus masou (Cherry salmon).